Here is a 118-residue protein sequence, read N- to C-terminus: Large ribosomal subunit protein bL19 (118 aa).

This sequence belongs to the bacterial ribosomal protein bL19 family.

This protein is located at the 30S-50S ribosomal subunit interface and may play a role in the structure and function of the aminoacyl-tRNA binding site. This chain is Large ribosomal subunit protein bL19, found in Metamycoplasma arthritidis (strain 158L3-1) (Mycoplasma arthritidis).